Here is a 497-residue protein sequence, read N- to C-terminus: Probable cytosol aminopeptidase (497 aa).

K263 and D268 together coordinate Mn(2+). K275 is an active-site residue. Mn(2+) contacts are provided by D286, D345, and E347. R349 is a catalytic residue.

It belongs to the peptidase M17 family. Mn(2+) serves as cofactor.

The protein localises to the cytoplasm. The enzyme catalyses Release of an N-terminal amino acid, Xaa-|-Yaa-, in which Xaa is preferably Leu, but may be other amino acids including Pro although not Arg or Lys, and Yaa may be Pro. Amino acid amides and methyl esters are also readily hydrolyzed, but rates on arylamides are exceedingly low.. The catalysed reaction is Release of an N-terminal amino acid, preferentially leucine, but not glutamic or aspartic acids.. Functionally, presumably involved in the processing and regular turnover of intracellular proteins. Catalyzes the removal of unsubstituted N-terminal amino acids from various peptides. The polypeptide is Probable cytosol aminopeptidase (Agrobacterium fabrum (strain C58 / ATCC 33970) (Agrobacterium tumefaciens (strain C58))).